Consider the following 121-residue polypeptide: Large ribosomal subunit protein bL12 (121 aa).

Belongs to the bacterial ribosomal protein bL12 family. Homodimer. Part of the ribosomal stalk of the 50S ribosomal subunit. Forms a multimeric L10(L12)X complex, where L10 forms an elongated spine to which 2 to 4 L12 dimers bind in a sequential fashion. Binds GTP-bound translation factors.

In terms of biological role, forms part of the ribosomal stalk which helps the ribosome interact with GTP-bound translation factors. Is thus essential for accurate translation. In Lactococcus lactis subsp. lactis (strain IL1403) (Streptococcus lactis), this protein is Large ribosomal subunit protein bL12.